We begin with the raw amino-acid sequence, 177 residues long: Small ribosomal subunit protein uS5 (177 aa).

The region spanning Leu-21 to Val-84 is the S5 DRBM domain.

The protein belongs to the universal ribosomal protein uS5 family. In terms of assembly, part of the 30S ribosomal subunit. Contacts proteins S4 and S8.

Functionally, with S4 and S12 plays an important role in translational accuracy. In terms of biological role, located at the back of the 30S subunit body where it stabilizes the conformation of the head with respect to the body. In Rhodopirellula baltica (strain DSM 10527 / NCIMB 13988 / SH1), this protein is Small ribosomal subunit protein uS5.